The primary structure comprises 213 residues: Uridine kinase (213 aa).

Gly14–Ser21 provides a ligand contact to ATP.

It belongs to the uridine kinase family.

It localises to the cytoplasm. The catalysed reaction is uridine + ATP = UMP + ADP + H(+). It catalyses the reaction cytidine + ATP = CMP + ADP + H(+). It participates in pyrimidine metabolism; CTP biosynthesis via salvage pathway; CTP from cytidine: step 1/3. The protein operates within pyrimidine metabolism; UMP biosynthesis via salvage pathway; UMP from uridine: step 1/1. The protein is Uridine kinase of Vibrio vulnificus (strain CMCP6).